The chain runs to 435 residues: GTPase Der (435 aa).

EngA-type G domains are found at residues 4 to 167 (KIVA…SKND) and 175 to 350 (TKIA…QSLS). GTP is bound by residues 10 to 17 (GKPNVGKS), 57 to 61 (DTGGI), 119 to 122 (NKYD), 181 to 188 (GKPNVGKS), 228 to 232 (DTAGI), and 293 to 296 (NKWD). Residues 351–435 (VKVKTYVLNE…PINLIFRERK (85 aa)) enclose the KH-like domain.

Belongs to the TRAFAC class TrmE-Era-EngA-EngB-Septin-like GTPase superfamily. EngA (Der) GTPase family. In terms of assembly, associates with the 50S ribosomal subunit.

GTPase that plays an essential role in the late steps of ribosome biogenesis. This is GTPase Der from Mycoplasma capricolum subsp. capricolum (strain California kid / ATCC 27343 / NCTC 10154).